The following is a 206-amino-acid chain: Large ribosomal subunit protein uL4 (206 aa).

Residues methionine 63–glutamate 97 form a disordered region. Residues tyrosine 64 to alanine 77 show a composition bias toward basic residues.

Belongs to the universal ribosomal protein uL4 family. Part of the 50S ribosomal subunit.

One of the primary rRNA binding proteins, this protein initially binds near the 5'-end of the 23S rRNA. It is important during the early stages of 50S assembly. It makes multiple contacts with different domains of the 23S rRNA in the assembled 50S subunit and ribosome. In terms of biological role, forms part of the polypeptide exit tunnel. This is Large ribosomal subunit protein uL4 from Rhizobium etli (strain CIAT 652).